The chain runs to 352 residues: Quinolinate synthase (352 aa).

Residues His48 and Ser69 each contribute to the iminosuccinate site. [4Fe-4S] cluster is bound at residue Cys114. Iminosuccinate is bound by residues 140 to 142 and Ser157; that span reads YAN. Cys201 serves as a coordination point for [4Fe-4S] cluster. Residues 227–229 and Thr244 contribute to the iminosuccinate site; that span reads HPE. Cys298 contacts [4Fe-4S] cluster.

This sequence belongs to the quinolinate synthase family. Type 1 subfamily. [4Fe-4S] cluster serves as cofactor.

Its subcellular location is the cytoplasm. It catalyses the reaction iminosuccinate + dihydroxyacetone phosphate = quinolinate + phosphate + 2 H2O + H(+). It functions in the pathway cofactor biosynthesis; NAD(+) biosynthesis; quinolinate from iminoaspartate: step 1/1. Functionally, catalyzes the condensation of iminoaspartate with dihydroxyacetone phosphate to form quinolinate. This is Quinolinate synthase from Pseudomonas syringae pv. syringae (strain B728a).